The chain runs to 128 residues: MQRNMLKSKIHRVAVTHCELHYEGSCAIDEDLLEAANIVENERIDIWNINNGERFSTYAIKGERGSGMISLNGSAARRAQLGDLVIIAAFAVVDEAELKAGWKPDLVFVDDNNKIKGSRDHVPTQNWT.

Ser25 (schiff-base intermediate with substrate; via pyruvic acid) is an active-site residue. Position 25 is a pyruvic acid (Ser) (Ser25). Thr57 contacts substrate. Catalysis depends on Tyr58, which acts as the Proton donor. Residue 73-75 (GSA) participates in substrate binding.

It belongs to the PanD family. In terms of assembly, heterooctamer of four alpha and four beta subunits. Pyruvate is required as a cofactor. Is synthesized initially as an inactive proenzyme, which is activated by self-cleavage at a specific serine bond to produce a beta-subunit with a hydroxyl group at its C-terminus and an alpha-subunit with a pyruvoyl group at its N-terminus.

It is found in the cytoplasm. The enzyme catalyses L-aspartate + H(+) = beta-alanine + CO2. It functions in the pathway cofactor biosynthesis; (R)-pantothenate biosynthesis; beta-alanine from L-aspartate: step 1/1. In terms of biological role, catalyzes the pyruvoyl-dependent decarboxylation of aspartate to produce beta-alanine. In Paraburkholderia phytofirmans (strain DSM 17436 / LMG 22146 / PsJN) (Burkholderia phytofirmans), this protein is Aspartate 1-decarboxylase.